Here is a 401-residue protein sequence, read N- to C-terminus: Phosrestin-1 (401 aa).

This sequence belongs to the arrestin family.

In terms of biological role, directly interacts with light-activated rhodopsin thereby activating the phosphorylation of metarhodopsin. Inhibits the dephosphorylation of metarhodopsin. The polypeptide is Phosrestin-1 (ARR2) (Calliphora vicina (Blue blowfly)).